Here is a 65-residue protein sequence, read N- to C-terminus: Period circadian protein (65 aa).

The interval 1–65 (EGSGGSGSSG…VTLTESLLNK (65 aa)) is disordered. The span at 18–28 (VRMSSVTNTSN) shows a compositional bias: polar residues. Positions 29–38 (AGTGTSAGDN) are enriched in low complexity. Polar residues predominate over residues 56–65 (VTLTESLLNK).

Forms a heterodimer with timeless (TIM); the complex then translocates into the nucleus. Phosphorylated with a circadian rhythmicity, probably by the double-time protein (dbt). Phosphorylation could be implicated in the stability of per monomer and in the formation of heterodimer per-tim.

It is found in the nucleus. The protein resides in the cytoplasm. The protein localises to the perinuclear region. Functionally, essential for biological clock functions. Determines the period length of circadian and ultradian rhythms; an increase in PER dosage leads to shortened circadian rhythms and a decrease leads to lengthened circadian rhythms. Essential for the circadian rhythmicity of locomotor activity, eclosion behavior, and for the rhythmic component of the male courtship song that originates in the thoracic nervous system. The biological cycle depends on the rhythmic formation and nuclear localization of the TIM-PER complex. Light induces the degradation of TIM, which promotes elimination of PER. Nuclear activity of the heterodimer coordinatively regulates PER and TIM transcription through a negative feedback loop. Behaves as a negative element in circadian transcriptional loop. Does not appear to bind DNA, suggesting indirect transcriptional inhibition. The protein is Period circadian protein (per) of Drosophila mojavensis (Fruit fly).